Consider the following 132-residue polypeptide: Myelin P2 protein (132 aa).

Residue Ser2 is modified to N-acetylserine. (9Z)-octadecenoate-binding positions include Arg107 and 127–129 (RIY). Hexadecanoate-binding positions include Arg107 and 127–129 (RIY).

The protein belongs to the calycin superfamily. Fatty-acid binding protein (FABP) family. In terms of assembly, monomer.

The protein resides in the cytoplasm. May play a role in lipid transport protein in Schwann cells. May bind cholesterol. In Oryctolagus cuniculus (Rabbit), this protein is Myelin P2 protein (PMP2).